The following is a 113-amino-acid chain: Stigma/stylar cysteine-rich adhesin (113 aa).

The first 22 residues, 1–22 (MARSSAVCFLLLLAFLIGTASA), serve as a signal peptide directing secretion. Disulfide bonds link Cys-25–Cys-72, Cys-35–Cys-49, Cys-50–Cys-95, and Cys-70–Cys-109.

Belongs to the plant LTP family. In terms of tissue distribution, highly expressed in style and stigma, abundant in young leaves and petals, and low expression in young anthers at pollen mother cell stage with an active tapetum. Not expressed in mature leaves or in pollen grains or tubes. Found in the stylar transmitting tract epidermis and in the stylar extracellular matrix.

Its function is as follows. Acts as an adhesive agent between the pollen tube wall and the stylar transmitting tract epidermis. Binds a stylar pectin in a pH-dependent manner. Enhances activity of chemocyanin, a diffusible chemotropic factor. The protein is Stigma/stylar cysteine-rich adhesin (SCA) of Lilium longiflorum (Trumpet lily).